The primary structure comprises 239 residues: Transcriptional regulatory protein BtsR (239 aa).

One can recognise a Response regulatory domain in the interval 3–116; it reads KVLIVDDEPL…RLEKTLARLR (114 aa). Aspartate 54 carries the post-translational modification 4-aspartylphosphate. Residues 137–239 enclose the HTH LytTR-type domain; it reads IPCTGHSRIY…LKSLKEAIGL (103 aa).

Post-translationally, phosphorylated by BtsS.

Functionally, member of the two-component regulatory system BtsS/BtsR. BtsR regulates expression of btsT by binding to its promoter region. The sequence is that of Transcriptional regulatory protein BtsR from Shigella flexneri.